The chain runs to 374 residues: Speckle-type POZ protein A (374 aa).

Residues 31–161 (KFSYMWTINN…DDKLTLFCEV (131 aa)) enclose the MATH domain. Residues 71–191 (VNPKGLDEES…PECRLADELG (121 aa)) are required for nuclear localization. Residues 173-297 (QNTMNMVKVP…MCEEALCSNL (125 aa)) form the BTB domain. The homodimerization stretch occupies residues 297–355 (LSVENAAEILILADLHSADQLKTQAVDFINYHASDVMETSGWKSMVVSHPHLVAEAYRS).

This sequence belongs to the Tdpoz family. As to quaternary structure, homodimer. Part of cullin-RING-based BCR (BTB-CUL3-RBX1) E3 ubiquitin-protein ligase complexes that contain CUL3 and SPOP, plus a target protein.

It is found in the nucleus. It localises to the nucleus speckle. It participates in protein modification; protein ubiquitination. Functionally, component of a cullin-RING-based BCR (BTB-CUL3-RBX1) E3 ubiquitin-protein ligase complex that mediates the ubiquitination of target proteins, leading most often to their proteasomal degradation. The polypeptide is Speckle-type POZ protein A (spop-a) (Xenopus laevis (African clawed frog)).